A 234-amino-acid polypeptide reads, in one-letter code: NAD-dependent protein deacetylase (234 aa).

Residues 1–234 (MSDITAAQTT…AVDFFEGVQV (234 aa)) enclose the Deacetylase sirtuin-type domain. Residues A23, T27, R35, Q99, I101, D102, H117, T184, S185, N208, and V226 each contribute to the NAD(+) site. Positions 101 and 102 each coordinate nicotinamide. Residue H117 is the Proton acceptor of the active site.

It belongs to the sirtuin family. Class U subfamily.

It is found in the cytoplasm. It catalyses the reaction N(6)-acetyl-L-lysyl-[protein] + NAD(+) + H2O = 2''-O-acetyl-ADP-D-ribose + nicotinamide + L-lysyl-[protein]. In terms of biological role, NAD-dependent protein deacetylase which modulates the activities of several enzymes which are inactive in their acetylated form. This Lactiplantibacillus plantarum (strain ATCC BAA-793 / NCIMB 8826 / WCFS1) (Lactobacillus plantarum) protein is NAD-dependent protein deacetylase.